A 396-amino-acid chain; its full sequence is Nitrate regulatory protein (396 aa).

In terms of domain architecture, NIT spans 37-284; the sequence is GQISALVHML…VDLLNAADAL (248 aa). The region spanning 323–384 is the ANTAR domain; that stretch reads LQQLSGQLAS…RMVEIARALL (62 aa).

In terms of biological role, nitrate- and nitrite-responsive positive regulator for nasFEDCBA operon expression. NasR protein binds to the factor-independent terminator site located in the nasF operon leader RNA to effect transcription antitermination. The sequence is that of Nitrate regulatory protein (nasR) from Klebsiella oxytoca.